A 453-amino-acid chain; its full sequence is 4,4'-diapolycopene-4,4'-dial dehydrogenase (453 aa).

Positions 1–20 (MPDNDSHSLKSLPERQREDL) are enriched in basic and acidic residues. A disordered region spans residues 1 to 23 (MPDNDSHSLKSLPERQREDLFSA). Catalysis depends on residues glutamate 215 and cysteine 249.

This sequence belongs to the aldehyde dehydrogenase family.

It catalyses the reaction all-trans-4,4'-diapolycopene-4,4'-dial + 2 A + 2 H2O = all-trans-4,4'-diapolycopene-4,4'-dioate + 2 AH2 + 2 H(+). Its pathway is carotenoid biosynthesis. Its function is as follows. Involved in the biosynthesis of the major C30 carotenoid 4,4'-diapolycopene-4,4'-dioic acid, which protects B.firmus from peroxidative reactions. Catalyzes the oxidation of 4,4'-diapolycopene-4,4'-dial to yield 4,4'-diapolycopene-4,4'-dioic aci. In Cytobacillus firmus (Bacillus firmus), this protein is 4,4'-diapolycopene-4,4'-dial dehydrogenase.